The sequence spans 397 residues: ATP-dependent RNA helicase eIF4A (397 aa).

The short motif at 23-51 (YTFDDLNLKPNIVRGIFGYGYESPSAIQQ) is the Q motif element. The region spanning 54–224 (ILPITEGRDV…TKFMNNPVRI (171 aa)) is the Helicase ATP-binding domain. 67–74 (AQSGTGKT) lines the ATP pocket. A DEAD box motif is present at residues 172–175 (DEAD). The 162-residue stretch at 235 to 396 (GIKQFYINVE…EMPADIGALF (162 aa)) folds into the Helicase C-terminal domain.

The protein belongs to the DEAD box helicase family. eIF4A subfamily. In terms of assembly, component of the eIF4F complex, which composition varies with external and internal environmental conditions. It is composed of at least eIF4A, eIF4E and eIF4G.

It is found in the cytoplasm. It catalyses the reaction ATP + H2O = ADP + phosphate + H(+). In terms of biological role, ATP-dependent RNA helicase which is a subunit of the eIF4F complex involved in cap recognition and is required for mRNA binding to ribosome. In the current model of translation initiation, eIF4A unwinds RNA secondary structures in the 5'-UTR of mRNAs which is necessary to allow efficient binding of the small ribosomal subunit, and subsequent scanning for the initiator codon. In Debaryomyces hansenii (strain ATCC 36239 / CBS 767 / BCRC 21394 / JCM 1990 / NBRC 0083 / IGC 2968) (Yeast), this protein is ATP-dependent RNA helicase eIF4A (TIF1).